The following is a 374-amino-acid chain: tRNA-specific 2-thiouridylase MnmA (374 aa).

Residues 17 to 24 (GMSGGVDS) and M43 contribute to the ATP site. An interaction with target base in tRNA region spans residues 103–105 (NPD). C108 functions as the Nucleophile in the catalytic mechanism. A disulfide bond links C108 and C204. An ATP-binding site is contributed by G132. Positions 154-156 (KDQ) are interaction with tRNA. The active-site Cysteine persulfide intermediate is the C204. The segment at 316-317 (RY) is interaction with tRNA.

It belongs to the MnmA/TRMU family.

It is found in the cytoplasm. The catalysed reaction is S-sulfanyl-L-cysteinyl-[protein] + uridine(34) in tRNA + AH2 + ATP = 2-thiouridine(34) in tRNA + L-cysteinyl-[protein] + A + AMP + diphosphate + H(+). Functionally, catalyzes the 2-thiolation of uridine at the wobble position (U34) of tRNA, leading to the formation of s(2)U34. This chain is tRNA-specific 2-thiouridylase MnmA, found in Pseudomonas fluorescens (strain SBW25).